A 184-amino-acid polypeptide reads, in one-letter code: Ribosome-recycling factor (184 aa).

Basic and acidic residues predominate over residues 133-162 (RDGMDNLKQDENKKEISEDERKRHETEVQK). Residues 133 to 163 (RDGMDNLKQDENKKEISEDERKRHETEVQKL) are disordered.

It belongs to the RRF family.

It localises to the cytoplasm. In terms of biological role, responsible for the release of ribosomes from messenger RNA at the termination of protein biosynthesis. May increase the efficiency of translation by recycling ribosomes from one round of translation to another. This Sphingopyxis alaskensis (strain DSM 13593 / LMG 18877 / RB2256) (Sphingomonas alaskensis) protein is Ribosome-recycling factor.